The sequence spans 178 residues: Cell division protein ZapC (178 aa).

It belongs to the ZapC family. Interacts directly with FtsZ.

The protein localises to the cytoplasm. In terms of biological role, contributes to the efficiency of the cell division process by stabilizing the polymeric form of the cell division protein FtsZ. Acts by promoting interactions between FtsZ protofilaments and suppressing the GTPase activity of FtsZ. This Pseudoalteromonas atlantica (strain T6c / ATCC BAA-1087) protein is Cell division protein ZapC.